The chain runs to 346 residues: Acetylserotonin O-methyltransferase (346 aa).

Residues tyrosine 148, tryptophan 165, aspartate 211, 236–238 (GDF), and lysine 253 each bind S-adenosyl-L-methionine. Histidine 256 functions as the Proton donor/acceptor in the catalytic mechanism. Residues aspartate 257, asparagine 303, and glutamine 307 each contribute to the substrate site.

The protein belongs to the class I-like SAM-binding methyltransferase superfamily. Cation-independent O-methyltransferase family. As to quaternary structure, homodimer. Expressed in pineal gland and retina.

The enzyme catalyses N-acetylserotonin + S-adenosyl-L-methionine = melatonin + S-adenosyl-L-homocysteine + H(+). It participates in aromatic compound metabolism; melatonin biosynthesis; melatonin from serotonin: step 1/2. In terms of biological role, catalyzes the transfer of a methyl group onto N-acetylserotonin, producing melatonin (N-acetyl-5-methoxytryptamine). The protein is Acetylserotonin O-methyltransferase (ASMT) of Gallus gallus (Chicken).